A 465-amino-acid chain; its full sequence is MSNKMWGGRFTDRPDAIMEEINVSIDVDRHLYAQDIAASKAHAAMLAAQGIITANDAKNIGKGLDTILSEIGAGKFTFKRALEDIHMNVESRLAELIGPAAGRLHTARSRNDQVATDFRLYVRDVLDETDAALAAFQFALAERALEQADTVMPGFTHLQTAQPVTFGHHLMAYVEMAARDRGRFQDARKRLNESPLGAAALAGTSFPIDRHATAQKLGFVRPMANSLDAVSDRDFVLETLSAASICAVHLSRFAEEIVIWTSPLVGLIRLSDKFTTGSSIMPQKRNPDAAELVRAKTGRVIGALNGLLIVMKGLPLAYQKDMQEDKQGAMEGFAALSLAIRAMTGMVRDLVPEHDRMRAAAGEGYATATDLADWLVRTLKMPFRDAHHVTGRIVGLAAKQGLALHELPLAEMQAVEKRITRDALAVLSVESSVKSRTSYGGTAPKNVRAQAKAWLKRLEKERKLG.

This sequence belongs to the lyase 1 family. Argininosuccinate lyase subfamily.

The protein localises to the cytoplasm. It catalyses the reaction 2-(N(omega)-L-arginino)succinate = fumarate + L-arginine. Its pathway is amino-acid biosynthesis; L-arginine biosynthesis; L-arginine from L-ornithine and carbamoyl phosphate: step 3/3. This Rhodopseudomonas palustris (strain HaA2) protein is Argininosuccinate lyase.